The chain runs to 219 residues: Small ribosomal subunit protein uS3 (219 aa).

The KH type-2 domain maps to 41–110 (IRKIINTEYS…DVSINICEVK (70 aa)).

It belongs to the universal ribosomal protein uS3 family. In terms of assembly, part of the 30S ribosomal subunit. Forms a tight complex with proteins S10 and S14.

In terms of biological role, binds the lower part of the 30S subunit head. Binds mRNA in the 70S ribosome, positioning it for translation. This chain is Small ribosomal subunit protein uS3, found in Orientia tsutsugamushi (strain Ikeda) (Rickettsia tsutsugamushi).